Reading from the N-terminus, the 100-residue chain is Large ribosomal subunit protein uL23 (100 aa).

It belongs to the universal ribosomal protein uL23 family. Part of the 50S ribosomal subunit. Contacts protein L29, and trigger factor when it is bound to the ribosome.

Functionally, one of the early assembly proteins it binds 23S rRNA. One of the proteins that surrounds the polypeptide exit tunnel on the outside of the ribosome. Forms the main docking site for trigger factor binding to the ribosome. This is Large ribosomal subunit protein uL23 from Prochlorococcus marinus (strain MIT 9515).